A 385-amino-acid chain; its full sequence is 8-amino-7-oxononanoate synthase (385 aa).

Arginine 21 contributes to the substrate binding site. Residue 108 to 109 coordinates pyridoxal 5'-phosphate; that stretch reads GF. Position 133 (histidine 133) interacts with substrate. Positions 179, 207, and 233 each coordinate pyridoxal 5'-phosphate. At lysine 236 the chain carries N6-(pyridoxal phosphate)lysine. Threonine 352 serves as a coordination point for substrate.

Belongs to the class-II pyridoxal-phosphate-dependent aminotransferase family. BioF subfamily. Homodimer. The cofactor is pyridoxal 5'-phosphate.

It catalyses the reaction 6-carboxyhexanoyl-[ACP] + L-alanine + H(+) = (8S)-8-amino-7-oxononanoate + holo-[ACP] + CO2. The protein operates within cofactor biosynthesis; biotin biosynthesis. Catalyzes the decarboxylative condensation of pimeloyl-[acyl-carrier protein] and L-alanine to produce 8-amino-7-oxononanoate (AON), [acyl-carrier protein], and carbon dioxide. This chain is 8-amino-7-oxononanoate synthase, found in Salmonella enteritidis PT4 (strain P125109).